Consider the following 307-residue polypeptide: Protein phosphatase PTC7 homolog fig (307 aa).

Positions 41-300 constitute a PPM-type phosphatase domain; the sequence is VQGSSKDQQL…DDITVILASV (260 aa). 3 residues coordinate Mn(2+): Asp77, Gly78, and Asp222.

Belongs to the PP2C family. Mg(2+) serves as cofactor. The cofactor is Mn(2+).

The enzyme catalyses O-phospho-L-seryl-[protein] + H2O = L-seryl-[protein] + phosphate. The catalysed reaction is O-phospho-L-threonyl-[protein] + H2O = L-threonyl-[protein] + phosphate. This is Protein phosphatase PTC7 homolog fig from Drosophila grimshawi (Hawaiian fruit fly).